The primary structure comprises 171 residues: Protein-export protein SecB (171 aa).

It belongs to the SecB family. Homotetramer, a dimer of dimers. One homotetramer interacts with 1 SecA dimer.

Its subcellular location is the cytoplasm. One of the proteins required for the normal export of preproteins out of the cell cytoplasm. It is a molecular chaperone that binds to a subset of precursor proteins, maintaining them in a translocation-competent state. It also specifically binds to its receptor SecA. The polypeptide is Protein-export protein SecB (Histophilus somni (strain 2336) (Haemophilus somnus)).